The chain runs to 250 residues: UDP-2,3-diacylglucosamine hydrolase (250 aa).

5 residues coordinate Mn(2+): Asp8, His10, Asp41, Asn79, and His115. 79 to 80 (NH) provides a ligand contact to substrate. Substrate is bound by residues Asp123, Thr165, Lys168, and His196. Residues His196 and His198 each coordinate Mn(2+).

Belongs to the LpxH family. The cofactor is Mn(2+).

The protein resides in the cell inner membrane. It catalyses the reaction UDP-2-N,3-O-bis[(3R)-3-hydroxytetradecanoyl]-alpha-D-glucosamine + H2O = 2-N,3-O-bis[(3R)-3-hydroxytetradecanoyl]-alpha-D-glucosaminyl 1-phosphate + UMP + 2 H(+). Its pathway is glycolipid biosynthesis; lipid IV(A) biosynthesis; lipid IV(A) from (3R)-3-hydroxytetradecanoyl-[acyl-carrier-protein] and UDP-N-acetyl-alpha-D-glucosamine: step 4/6. In terms of biological role, hydrolyzes the pyrophosphate bond of UDP-2,3-diacylglucosamine to yield 2,3-diacylglucosamine 1-phosphate (lipid X) and UMP by catalyzing the attack of water at the alpha-P atom. Involved in the biosynthesis of lipid A, a phosphorylated glycolipid that anchors the lipopolysaccharide to the outer membrane of the cell. This Blochmanniella pennsylvanica (strain BPEN) protein is UDP-2,3-diacylglucosamine hydrolase.